Consider the following 239-residue polypeptide: uncharacterized protein (239 aa).

3 helical membrane passes run 125–144 (LAII…LILY), 149–171 (IFVL…FLFL), and 197–216 (SVLN…GILF).

It is found in the cell membrane. This is an uncharacterized protein from Aquifex aeolicus (strain VF5).